Reading from the N-terminus, the 213-residue chain is Orotate phosphoribosyltransferase (213 aa).

Lys26 lines the 5-phospho-alpha-D-ribose 1-diphosphate pocket. 34 to 35 (FF) lines the orotate pocket. 5-phospho-alpha-D-ribose 1-diphosphate contacts are provided by residues 72-73 (YK), Arg99, Lys100, Lys103, His105, and 124-132 (DDVITAGTA). 2 residues coordinate orotate: Thr128 and Arg156.

It belongs to the purine/pyrimidine phosphoribosyltransferase family. PyrE subfamily. In terms of assembly, homodimer. Mg(2+) is required as a cofactor.

It carries out the reaction orotidine 5'-phosphate + diphosphate = orotate + 5-phospho-alpha-D-ribose 1-diphosphate. It functions in the pathway pyrimidine metabolism; UMP biosynthesis via de novo pathway; UMP from orotate: step 1/2. In terms of biological role, catalyzes the transfer of a ribosyl phosphate group from 5-phosphoribose 1-diphosphate to orotate, leading to the formation of orotidine monophosphate (OMP). This chain is Orotate phosphoribosyltransferase, found in Serratia proteamaculans (strain 568).